We begin with the raw amino-acid sequence, 858 residues long: Cone cGMP-specific 3',5'-cyclic phosphodiesterase subunit alpha' (858 aa).

2 consecutive GAF domains span residues 75–224 (TPEQ…SIIL) and 256–433 (DVER…GWSL). 3',5'-cyclic GMP is bound by residues serine 97, aspartate 116, 169–172 (DKQT), and threonine 176. Residues 486-819 (EEKQLVAILK…VEWKSLADEY (334 aa)) enclose the PDEase domain. The Proton donor role is filled by histidine 562. Residues histidine 566, histidine 602, aspartate 603, and aspartate 723 each contribute to the a divalent metal cation site. The span at 830–852 (AKKQEGGAEKAAEDSGGGDDKKS) shows a compositional bias: basic and acidic residues. Residues 830–858 (AKKQEGGAEKAAEDSGGGDDKKSKTCLML) are disordered. Cysteine 855 carries the cysteine methyl ester modification. The S-geranylgeranyl cysteine moiety is linked to residue cysteine 855. The propeptide at 856-858 (LML) is removed in mature form.

It belongs to the cyclic nucleotide phosphodiesterase family. Composed of two alpha' subunits that are associated with 3 smaller proteins of 11, 13, and 15 kDa. A divalent metal cation serves as cofactor.

It localises to the cell membrane. It carries out the reaction 3',5'-cyclic GMP + H2O = GMP + H(+). In terms of biological role, as cone-specific cGMP phosphodiesterase, it plays an essential role in light detection and cone phototransduction by rapidly decreasing intracellular levels of cGMP. This chain is Cone cGMP-specific 3',5'-cyclic phosphodiesterase subunit alpha' (PDE6C), found in Homo sapiens (Human).